Reading from the N-terminus, the 518-residue chain is MKLAYWMYAGPAHIGTLRVASSFRNVHAIMHAPLGDDYFNVMRSMLERERDFTPVTASVVDRHVLARGSRDKVVSNISRKGEEQRPDLIVLTPTCTSSILQEDLQNFVDRASLYSESDVILADVNHYRVNELQASDKTLEQIVRYYLDRARKEGIFNRSLTDVPSANIIGILTLGFHNQHDCRELKRLLGELGVSINQIIPEGEFLNNLKDLPRAWFNIVPYREIGLMAASFLEKEYGMPYISTTPIGISNTADFVMQVEKLMNFWATVLLGKKFHYDQYVENQTKFVSQAAWFSKSIDCQNLAGKEAVVFGDATHAASITKILSGEMGIRVSCSGTYCKHDAGWFNEQVQGLCDEVIITEDHTEVGDTIARIEPSAIFGTQMERHIGKRIDIPCGVISSPVHIQNFPLGYRPFMGYEGTNQISDLIYNSFNLGMEDHLLDVFGGHDTKGISTKSLSTGGKSIDWTPEAESELKRIPGFVRGKVKKNTEVFARQNNILKITVDVMYAAKERRSIESLA.

D36 contacts [4Fe-4S] cluster. The Proton donor role is filled by D299. 434–435 (GM) contacts substrate.

The protein belongs to the ChlB/BchB/BchZ family. Protochlorophyllide reductase is composed of three subunits; ChlL, ChlN and ChlB. Forms a heterotetramer of two ChlB and two ChlN subunits. [4Fe-4S] cluster serves as cofactor.

The protein localises to the plastid. It is found in the chloroplast. It carries out the reaction chlorophyllide a + oxidized 2[4Fe-4S]-[ferredoxin] + 2 ADP + 2 phosphate = protochlorophyllide a + reduced 2[4Fe-4S]-[ferredoxin] + 2 ATP + 2 H2O. It functions in the pathway porphyrin-containing compound metabolism; chlorophyll biosynthesis (light-independent). In terms of biological role, component of the dark-operative protochlorophyllide reductase (DPOR) that uses Mg-ATP and reduced ferredoxin to reduce ring D of protochlorophyllide (Pchlide) to form chlorophyllide a (Chlide). This reaction is light-independent. The NB-protein (ChlN-ChlB) is the catalytic component of the complex. The polypeptide is Light-independent protochlorophyllide reductase subunit B (Adiantum capillus-veneris (Maidenhair fern)).